The following is a 142-amino-acid chain: MPNKALITGFWSKVKVDEVGAEALGRLLVVYPWTQRFFEHFGDLSTADAVLGNAKVKAHGKKVLDSFSNGVQHLDDLKGTFAQLSELHCDKLHVDPENFRLLGNVLVVVLARHFGKEFTPELQAEFQKVVAGVASALAHRYH.

The Globin domain maps to 2 to 142; the sequence is PNKALITGFW…VASALAHRYH (141 aa). 2 residues coordinate heme b: His-59 and His-88.

The protein belongs to the globin family. In terms of assembly, heterotetramer of two alpha chains and two beta chains. In terms of tissue distribution, red blood cells.

Functionally, involved in oxygen transport from the lung to the various peripheral tissues. In Ovis aries (Sheep), this protein is Hemoglobin subunit beta-C (HBBC).